Here is a 638-residue protein sequence, read N- to C-terminus: MTQLPKTPLLDQVTYPADLRKLEDRDLPQLAREVRDEMIDAVSRTGGHLGAGLGVVELTIAIHSVFDTPDDRLIFDVGHQCYPHKILTGRRDRIRTLRQEDGLSGFTRRAESEYDPFGAAHSSTSISAGLGMAIAADLDKNDRRVIAVIGDGAMSAGMAYEALNNAGALDARLIVILNDNDMSIAPPTGAMSAYLARLASGRTYMGFRDFGKKLTAYLGKNIDRAITRAVEHARGYVTGGTMFEEMGFYHIGPIDGHSFDHLLPVLRNVRDNARGPVLIHVVTQKGKGYPPAEAAADKYHGVNKFDVITGAQARVKPNAPSYTSVFAEALVQEATLDDKIVGITAAMPNGTGLDKLAEAFPSRCFDVGIAEQHAVTFAAGLAAEGYKPFAALYSTFLQRAYDQVVHDVAIQGLPVRFPIDRAGFVGADGPTHAGSFDTAFLTTLPGFVVMAAADEAELKHMVRTAVAYDAGPISFRYPRGEGVGVDMPVRGEILRIGKGRIVKEGTKVALLSFGTRLADCLLAAEDLDAAGLSTTVADARFAKPLDHDLIRQFARHHEMVITVEEGSVGGFGSQVMQYLSSEGLLDNGLKIRSLVMPDIWMEQAKPEAMNAHAGLDRAGIVSTVFRALGRGVAVGVAG.

Residues histidine 79 and 120–122 (AHS) each bind thiamine diphosphate. Aspartate 151 is a binding site for Mg(2+). Thiamine diphosphate contacts are provided by residues 152–153 (GA), asparagine 180, tyrosine 289, and glutamate 371. Mg(2+) is bound at residue asparagine 180.

The protein belongs to the transketolase family. DXPS subfamily. In terms of assembly, homodimer. It depends on Mg(2+) as a cofactor. Requires thiamine diphosphate as cofactor.

It catalyses the reaction D-glyceraldehyde 3-phosphate + pyruvate + H(+) = 1-deoxy-D-xylulose 5-phosphate + CO2. It functions in the pathway metabolic intermediate biosynthesis; 1-deoxy-D-xylulose 5-phosphate biosynthesis; 1-deoxy-D-xylulose 5-phosphate from D-glyceraldehyde 3-phosphate and pyruvate: step 1/1. Catalyzes the acyloin condensation reaction between C atoms 2 and 3 of pyruvate and glyceraldehyde 3-phosphate to yield 1-deoxy-D-xylulose-5-phosphate (DXP). This chain is 1-deoxy-D-xylulose-5-phosphate synthase, found in Rhizobium leguminosarum bv. trifolii (strain WSM2304).